Consider the following 1172-residue polypeptide: Laminin subunit beta-3 (1172 aa).

An N-terminal signal peptide occupies residues 1-17 (MRPFFLLCFALPGLLHA). One can recognise a Laminin N-terminal domain in the interval 22–249 (SRGACYPPVG…AVSQLRLQGS (228 aa)). A glycan (N-linked (GlcNAc...) asparagine) is linked at Asn-220. 24 disulfide bridges follow: Cys-250-Cys-259, Cys-252-Cys-279, Cys-281-Cys-290, Cys-293-Cys-313, Cys-316-Cys-325, Cys-318-Cys-343, Cys-346-Cys-355, Cys-358-Cys-376, Cys-379-Cys-392, Cys-381-Cys-399, Cys-401-Cys-410, Cys-413-Cys-428, Cys-431-Cys-444, Cys-433-Cys-451, Cys-453-Cys-462, Cys-465-Cys-478, Cys-481-Cys-493, Cys-483-Cys-500, Cys-502-Cys-511, Cys-519-Cys-531, Cys-534-Cys-546, Cys-536-Cys-553, Cys-555-Cys-564, and Cys-567-Cys-578. Laminin EGF-like domains lie at 250-315 (CFCH…ECQR), 316-378 (CDCN…TCIS), 379-430 (CECD…GCHR), 431-480 (CDCN…GCEP), 481-533 (CACD…GCRA), and 534-580 (CDCD…VCVA). The tract at residues 579–785 (VACHPCFQTY…SLPDLTPTFN (207 aa)) is domain II. N-linked (GlcNAc...) asparagine glycosylation is present at Asn-604. Positions 723–757 (EQSAQAAQQVSDSSRLLDQLRDSRREAERLVRQAG) form a coiled coil. Residues 786–816 (KLCGNSRQMACTPISCPGELCPQDNGTACGS) are domain alpha. N-linked (GlcNAc...) asparagine glycosylation occurs at Asn-810. Residues 817-1170 (RCRGVLPRAG…INGRVLYYAT (354 aa)) form a domain I region. Coiled-coil stretches lie at residues 831 to 884 (MAGQ…MEED) and 948 to 1133 (VLSQ…ELEL).

In terms of assembly, laminin is a complex glycoprotein, consisting of three different polypeptide chains (alpha, beta, gamma), which are bound to each other by disulfide bonds into a cross-shaped molecule comprising one long and three short arms with globules at each end. Beta-3 is a subunit of laminin-5 (laminin-332 or epiligrin/kalinin/nicein). Interacts with ECM1. As to expression, found in the basement membranes (major component).

It localises to the secreted. The protein resides in the extracellular space. It is found in the extracellular matrix. The protein localises to the basement membrane. Binding to cells via a high affinity receptor, laminin is thought to mediate the attachment, migration and organization of cells into tissues during embryonic development by interacting with other extracellular matrix components. The polypeptide is Laminin subunit beta-3 (LAMB3) (Homo sapiens (Human)).